A 147-amino-acid polypeptide reads, in one-letter code: Myoglobin (147 aa).

One can recognise a Globin domain in the interval 2–141 (ADFDMVLKCW…IITDMEADYK (140 aa)). His-60 is a nitrite binding site. Residue His-60 participates in O2 binding. Residue His-89 coordinates heme b.

It belongs to the globin family. Monomeric.

The protein resides in the cytoplasm. Its subcellular location is the sarcoplasm. The enzyme catalyses Fe(III)-heme b-[protein] + nitric oxide + H2O = Fe(II)-heme b-[protein] + nitrite + 2 H(+). The catalysed reaction is H2O2 + AH2 = A + 2 H2O. Functionally, monomeric heme protein which primary function is to store oxygen and facilitate its diffusion within muscle tissues. Reversibly binds oxygen through a pentacoordinated heme iron and enables its timely and efficient release as needed during periods of heightened demand. Depending on the oxidative conditions of tissues and cells, and in addition to its ability to bind oxygen, it also has a nitrite reductase activity whereby it regulates the production of bioactive nitric oxide. Under stress conditions, like hypoxia and anoxia, it also protects cells against reactive oxygen species thanks to its pseudoperoxidase activity. This Channichthys rhinoceratus (Unicorn icefish) protein is Myoglobin (mb).